The following is a 61-amino-acid chain: Translational regulator CsrA (61 aa).

It belongs to the CsrA/RsmA family. In terms of assembly, homodimer; the beta-strands of each monomer intercalate to form a hydrophobic core, while the alpha-helices form wings that extend away from the core.

It localises to the cytoplasm. Its function is as follows. A key translational regulator that binds mRNA to regulate translation initiation and/or mRNA stability. Mediates global changes in gene expression, shifting from rapid growth to stress survival by linking envelope stress, the stringent response and the catabolite repression systems. Usually binds in the 5'-UTR; binding at or near the Shine-Dalgarno sequence prevents ribosome-binding, repressing translation, binding elsewhere in the 5'-UTR can activate translation and/or stabilize the mRNA. Its function is antagonized by small RNA(s). The protein is Translational regulator CsrA of Glaesserella parasuis serovar 5 (strain SH0165) (Haemophilus parasuis).